Consider the following 92-residue polypeptide: DNA-directed RNA polymerase subunit omega (92 aa).

It belongs to the RNA polymerase subunit omega family. In terms of assembly, the RNAP catalytic core consists of 2 alpha, 1 beta, 1 beta' and 1 omega subunit. When a sigma factor is associated with the core the holoenzyme is formed, which can initiate transcription.

The enzyme catalyses RNA(n) + a ribonucleoside 5'-triphosphate = RNA(n+1) + diphosphate. Its function is as follows. Promotes RNA polymerase assembly. Latches the N- and C-terminal regions of the beta' subunit thereby facilitating its interaction with the beta and alpha subunits. The sequence is that of DNA-directed RNA polymerase subunit omega from Shewanella amazonensis (strain ATCC BAA-1098 / SB2B).